The chain runs to 776 residues: MEIGWMHNRRQRQVLVFFVLLSLSGAGAELGSYSVVEETERGSFVANLGKDLGLGLTEMSTRKARIISQGNKQHLQLKAQTGDLLINEKLDREELCGPTEPCILHFQVLMENPLEIFQAELRVIDINDHSPMFTEKEMILKIPENSPLGTEFPLNHALDLDVGSNNVQNYKISPSSHFRVLIHEFRDGRKYPELVLDKELDREEEPQLRLTLTALDGGSPPRSGTAQVRIEVVDINDNAPEFEQPIYKVQIPENSPLGSLVATVSARDLDGGANGKISYTLFQPSEDISKTLEVNPMTGEVRLRKQVDFEMVTSYEVRIKATDGGGLSGKCTLLLQVVDVNDNPPQVTMSALTSPIPENSPEIVVAVFSVSDPDSGNNGKTISSIQEDLPFLLKPSVKNFYTLVTERALDREARAEYNITLTVTDMGTPRLKTEHNITVQISDVNDNAPTFTQTSYTLFVRENNSPALHIGSVSATDRDSGTNAQVTYSLLPPQDPHLPLASLVSINADNGHLFALRSLDYEALQAFEFRVGATDRGSPALSREALVRVLVLDANDNSPFVLYPLQNGSAPCTELVPRAAEPGYLVTKVVAVDGDSGQNAWLSYQLLKATEPGLFGVWAHNGEVRTARLLSERDAAKQRLVVLVKDNGEPPRSATATLHVLLVDGFSQPFLPLPEAAPGQTQANSLTVYLVVALASVSSLFLFSVLLFVAVRLCRRSRAASVGRCSMPEGPFPGRLVDVSGTGTLSQSYQYEVCLTGGSETSEFKFLKPIIPNFSP.

Positions 1-28 (MEIGWMHNRRQRQVLVFFVLLSLSGAGA) are cleaved as a signal peptide. The Extracellular portion of the chain corresponds to 29–690 (ELGSYSVVEE…TQANSLTVYL (662 aa)). Cadherin domains follow at residues 35-133 (VVEE…SPMF), 138-242 (MILK…APEF), 247-347 (YKVQ…PPQV), 352-451 (LTSP…APTF), and 456-561 (YTLF…SPFV). Residues N418 and N436 are each glycosylated (N-linked (GlcNAc...) asparagine). N567 carries N-linked (GlcNAc...) asparagine glycosylation. One can recognise a Cadherin 6 domain in the interval 568 to 671 (GSAPCTELVP…LVDGFSQPFL (104 aa)). A helical membrane pass occupies residues 691–711 (VVALASVSSLFLFSVLLFVAV). The Cytoplasmic segment spans residues 712 to 776 (RLCRRSRAAS…LKPIIPNFSP (65 aa)).

The protein localises to the membrane. In terms of biological role, potential calcium-dependent cell-adhesion protein. May be involved in the establishment and maintenance of specific neuronal connections in the brain. This is Protocadherin beta-16 from Homo sapiens (Human).